The following is a 302-amino-acid chain: Stanniocalcin-2 (302 aa).

An N-terminal signal peptide occupies residues 1 to 24; the sequence is MCAERLGQFMTLALVLATFDPARG. Residues 23-44 are disordered; that stretch reads RGTDATNPPEGPQDRSPQQKGR. N-linked (GlcNAc...) asparagine glycans are attached at residues Asn73 and Asn74. The disordered stretch occupies residues 217–302; sequence RPPTAPPERQ…EQSEYSDIRR (86 aa). A compositionally biased stretch (basic and acidic residues) spans 227-264; that stretch reads PQVDRTKLSRAHHGEAGHHLPEPSSRETGRGAKGERGS. Ser250 and Ser251 each carry phosphoserine. A Phosphothreonine modification is found at Thr254.

Belongs to the stanniocalcin family. Homodimer; disulfide-linked.

Its subcellular location is the secreted. Has an anti-hypocalcemic action on calcium and phosphate homeostasis. In Pongo abelii (Sumatran orangutan), this protein is Stanniocalcin-2 (STC2).